A 530-amino-acid chain; its full sequence is GMP synthase [glutamine-hydrolyzing] (530 aa).

A Glutamine amidotransferase type-1 domain is found at 4-205 (RILILDYGSQ…VKDICGCEGD (202 aa)). Cys84 functions as the Nucleophile in the catalytic mechanism. Catalysis depends on residues His179 and Glu181. The GMPS ATP-PPase domain occupies 206–398 (WNMPDYISEA…LGLPPQMVYR (193 aa)). An ATP-binding site is contributed by 233–239 (SGGVDSL).

In terms of assembly, homodimer.

The catalysed reaction is XMP + L-glutamine + ATP + H2O = GMP + L-glutamate + AMP + diphosphate + 2 H(+). Its pathway is purine metabolism; GMP biosynthesis; GMP from XMP (L-Gln route): step 1/1. Functionally, catalyzes the synthesis of GMP from XMP. The sequence is that of GMP synthase [glutamine-hydrolyzing] from Bordetella parapertussis (strain 12822 / ATCC BAA-587 / NCTC 13253).